Here is a 237-residue protein sequence, read N- to C-terminus: MSQLNVDLQEIAKFEALAAKWWDQHSEFRPLHQINPLRLNWIDERAGGLAGKKVLDVGCGGGILAESMARRGADVLGIDMGEAPLAIGRLHAQQENVQNIEYRQIPVEELAQEQAGQYDVVTCMEMMEHVPDPASIVKACQTLVKPGGHVFFSTINRNPKSYLFAIIGAEYVLRMLPKGTHDYHKFIRPSEMAHDIRNAGLTLKEMTGLHYNPITKRYWLAPNVDVNYMVHTIKTGV.

The S-adenosyl-L-methionine site is built by Arg38, Gly58, Asp79, and Met124.

This sequence belongs to the methyltransferase superfamily. UbiG/COQ3 family.

It carries out the reaction a 3-demethylubiquinol + S-adenosyl-L-methionine = a ubiquinol + S-adenosyl-L-homocysteine + H(+). It catalyses the reaction a 3-(all-trans-polyprenyl)benzene-1,2-diol + S-adenosyl-L-methionine = a 2-methoxy-6-(all-trans-polyprenyl)phenol + S-adenosyl-L-homocysteine + H(+). Its pathway is cofactor biosynthesis; ubiquinone biosynthesis. In terms of biological role, O-methyltransferase that catalyzes the 2 O-methylation steps in the ubiquinone biosynthetic pathway. This chain is Ubiquinone biosynthesis O-methyltransferase, found in Acinetobacter baumannii (strain ACICU).